A 279-amino-acid chain; its full sequence is Movement protein (279 aa).

The interval 247-279 (ESEELNVESPPAAIGSSSASRSEAFRPQVVNGL) is disordered. The span at 254 to 268 (ESPPAAIGSSSASRS) shows a compositional bias: low complexity.

This sequence belongs to the cucumovirus movement protein family.

The protein resides in the host cell junction. It localises to the host plasmodesma. In terms of biological role, transports viral genome to neighboring plant cells directly through plasmosdesmata, without any budding. The movement protein allows efficient cell to cell propagation, by bypassing the host cell wall barrier. Acts by forming a tubular structure at the host plasmodesmata, enlarging it enough to allow free passage of virion capsids. This Cucumis sativus (Cucumber) protein is Movement protein.